A 111-amino-acid polypeptide reads, in one-letter code: Disintegrin subunit alpha (111 aa).

Positions 1–20 (MIQVLLVTICLAVFPYQGSS) are cleaved as a signal peptide. Residues 21 to 44 (IILESGNVNDYEVVYPRKITPLPK) constitute a propeptide that is removed on maturation. In terms of domain architecture, Disintegrin spans 45–111 (GAVQPKNPCC…GDCPRKHFYA (67 aa)). Cystine bridges form between Cys-53–Cys-76, Cys-67–Cys-73, Cys-72–Cys-97, and Cys-85–Cys-104. Residues 89-91 (RGD) carry the Cell attachment site motif. Positions 110 to 111 (YA) are excised as a propeptide.

It belongs to the disintegrin family. Dimeric disintegrin subfamily. As to quaternary structure, heterodimer with subunit beta; disulfide-linked. As to expression, expressed by the venom gland.

Its subcellular location is the secreted. In terms of biological role, acts by binding to alpha-IIb/beta-3 (ITGA2B/ITGB3) on the platelet surface and inhibits both ADP-induced platelet aggregation and platelet aggregate dissociation in human platelet-rich plasma. The sequence is that of Disintegrin subunit alpha from Agkistrodon piscivorus leucostoma (Western cottonmouth).